Consider the following 20-residue polypeptide: Collagenolytic protease 28 kDa (20 aa).

The Peptidase S1 domain maps to 1–20 (IVGGQEASPGSWPXQVGLFF).

This sequence belongs to the peptidase S1 family.

The enzyme catalyses Hydrolysis of proteins, with broad specificity for peptide bonds. Native collagen is cleaved about 75% of the length of the molecule from the N-terminus. Low activity on small molecule substrates of both trypsin and chymotrypsin.. Functionally, this enzyme is a serine protease capable of degrading the native triple helix of collagen. The sequence is that of Collagenolytic protease 28 kDa from Paralithodes camtschaticus (Red king crab).